Reading from the N-terminus, the 727-residue chain is MKTQGLELETVIDIKHKPVSFTGGLEFESLTYTVTKKKKVDGKWSNEDVDLLHDITGYAPKGCITAVMGPSGAGKSTLLDGLAGRIASGSLKGKVSLDGNSVNASLIKRTSAYIMQEDRLFPMLTVYETLMFAADFRLGPLSAVDKRQRVEKLIEQLGLSSSRNTYIGDEGTRGVSGGERRRVSIGVDIIHGPSLLFLDEPTSGLDSTSALSVIEKLHDIARNGSTVILTIHQPSSRIQLLLDHLIILARGQLMFQGSLKDVGHHLNRMGRKIPKGENPIENLIDVIQEYDQCDFVGVEVLAEFARTGMKPPLLSDMEEIISYTNSIAPSPSPLHRGSKYEEKSQDFSYSSQISRRSLNDEFDHSIRSPYNNTPMSWSASNSAAFLKFTPSRLKNENKVQKPPSHASPGIYTYSSEILPATPTPHSSDYVVDENDYLTPTNSSQEHLGPKFANSYIGETWILMRRNFTNIRRTPELFLSRLMVLTFMGVMMATMFHNPKNTLQGITNRLSFFIFTVCLFFFSSNDAVPAFIQERFIFIRETSHNAYRASCYTIASLITHMPFLALQALAYAAIVWFALELRGPFIYFFLVLFISLLSTNSFVVFVSSIVPNYILGYAAVIAFTALFFLFCGYFLSSEDIPLYWRWMNKVSTMTYPYEGLLMNEYQTNETFGSNDGVSITGFDILKSLHIGTEEIKKRNNVLIMLGWAVLYRILFYIILRFASKNQRS.

Residues 1 to 475 lie on the Cytoplasmic side of the membrane; sequence MKTQGLELET…NFTNIRRTPE (475 aa). The ABC transporter domain maps to 25 to 275; that stretch reads LEFESLTYTV…LNRMGRKIPK (251 aa). 69–76 is a binding site for ATP; the sequence is GPSGAGKS. A helical transmembrane segment spans residues 476 to 496; that stretch reads LFLSRLMVLTFMGVMMATMFH. Residues 497–510 lie on the Extracellular side of the membrane; that stretch reads NPKNTLQGITNRLS. The chain crosses the membrane as a helical span at residues 511–531; that stretch reads FFIFTVCLFFFSSNDAVPAFI. At 532-559 the chain is on the cytoplasmic side; it reads QERFIFIRETSHNAYRASCYTIASLITH. Residues 560–580 traverse the membrane as a helical segment; sequence MPFLALQALAYAAIVWFALEL. Over 581 to 583 the chain is Extracellular; the sequence is RGP. Residues 584–604 traverse the membrane as a helical segment; the sequence is FIYFFLVLFISLLSTNSFVVF. The Cytoplasmic segment spans residues 605 to 612; that stretch reads VSSIVPNY. A helical membrane pass occupies residues 613-633; it reads ILGYAAVIAFTALFFLFCGYF. Over 634 to 699 the chain is Extracellular; that stretch reads LSSEDIPLYW…GTEEIKKRNN (66 aa). The N-linked (GlcNAc...) asparagine glycan is linked to N667. Residues 700–720 traverse the membrane as a helical segment; that stretch reads VLIMLGWAVLYRILFYIILRF. Residues 721–727 are Cytoplasmic-facing; it reads ASKNQRS.

It belongs to the ABC transporter superfamily. ABCG family. Stunted arbuscule (STR) subfamily. Heterodimerizes with STR; the resulting transporter is located in the peri-arbuscular membrane. As to expression, expressed constitutively in the vascular tissue of roots.

The protein resides in the cell membrane. In terms of biological role, together with STR, required for arbuscule development in arbuscular mycorrhizal symbiosis. The sequence is that of ABC transporter G family member STR2 from Medicago truncatula (Barrel medic).